Consider the following 201-residue polypeptide: Adenylyl-sulfate kinase (201 aa).

ATP is bound at residue 35-42 (GLSGSGKS). Ser109 acts as the Phosphoserine intermediate in catalysis.

The protein belongs to the APS kinase family.

The catalysed reaction is adenosine 5'-phosphosulfate + ATP = 3'-phosphoadenylyl sulfate + ADP + H(+). The protein operates within sulfur metabolism; hydrogen sulfide biosynthesis; sulfite from sulfate: step 2/3. In terms of biological role, catalyzes the synthesis of activated sulfate. The protein is Adenylyl-sulfate kinase of Citrobacter koseri (strain ATCC BAA-895 / CDC 4225-83 / SGSC4696).